A 365-amino-acid chain; its full sequence is Histidinol-phosphate aminotransferase (365 aa).

Lys-223 is subject to N6-(pyridoxal phosphate)lysine.

This sequence belongs to the class-II pyridoxal-phosphate-dependent aminotransferase family. Histidinol-phosphate aminotransferase subfamily. As to quaternary structure, homodimer. Pyridoxal 5'-phosphate serves as cofactor.

The catalysed reaction is L-histidinol phosphate + 2-oxoglutarate = 3-(imidazol-4-yl)-2-oxopropyl phosphate + L-glutamate. Its pathway is amino-acid biosynthesis; L-histidine biosynthesis; L-histidine from 5-phospho-alpha-D-ribose 1-diphosphate: step 7/9. In Bacillus pumilus (strain SAFR-032), this protein is Histidinol-phosphate aminotransferase.